Here is a 264-residue protein sequence, read N- to C-terminus: S-adenosylmethionine decarboxylase proenzyme (264 aa).

The active-site Schiff-base intermediate with substrate; via pyruvic acid is the serine 113. Serine 113 is subject to Pyruvic acid (Ser); by autocatalysis. Histidine 118 serves as the catalytic Proton acceptor; for processing activity. Cysteine 141 serves as the catalytic Proton donor; for catalytic activity.

Belongs to the prokaryotic AdoMetDC family. Type 2 subfamily. Heterooctamer of four alpha and four beta chains arranged as a tetramer of alpha/beta heterodimers. Requires pyruvate as cofactor. In terms of processing, is synthesized initially as an inactive proenzyme. Formation of the active enzyme involves a self-maturation process in which the active site pyruvoyl group is generated from an internal serine residue via an autocatalytic post-translational modification. Two non-identical subunits are generated from the proenzyme in this reaction, and the pyruvate is formed at the N-terminus of the alpha chain, which is derived from the carboxyl end of the proenzyme. The post-translation cleavage follows an unusual pathway, termed non-hydrolytic serinolysis, in which the side chain hydroxyl group of the serine supplies its oxygen atom to form the C-terminus of the beta chain, while the remainder of the serine residue undergoes an oxidative deamination to produce ammonia and the pyruvoyl group blocking the N-terminus of the alpha chain.

The enzyme catalyses S-adenosyl-L-methionine + H(+) = S-adenosyl 3-(methylsulfanyl)propylamine + CO2. It participates in amine and polyamine biosynthesis; S-adenosylmethioninamine biosynthesis; S-adenosylmethioninamine from S-adenosyl-L-methionine: step 1/1. Functionally, catalyzes the decarboxylation of S-adenosylmethionine to S-adenosylmethioninamine (dcAdoMet), the propylamine donor required for the synthesis of the polyamines spermine and spermidine from the diamine putrescine. In Pseudomonas paraeruginosa (strain DSM 24068 / PA7) (Pseudomonas aeruginosa (strain PA7)), this protein is S-adenosylmethionine decarboxylase proenzyme.